Consider the following 160-residue polypeptide: Protein max (160 aa).

Residues 1 to 13 (MSDNDDIEVESDE) are compositionally biased toward acidic residues. A disordered region spans residues 1–40 (MSDNDDIEVESDEEQPRFQSAADKRAHHNALERKRRDHIK). An N-acetylserine modification is found at Ser2. Phosphoserine is present on residues Ser2 and Ser11. The 52-residue stretch at 23–74 (DKRAHHNALERKRRDHIKDSFHSLRDSVPSLQGEKASRAQILDKATEYIQYM) folds into the bHLH domain. A compositionally biased stretch (basic and acidic residues) spans 29-40 (NALERKRRDHIK). Lys66 is modified (N6-acetyllysine). The tract at residues 81–102 (HQQDIDDLKRQNALLEQQVRAL) is leucine-zipper. Residues 105-160 (ARSSAQLQTNYPSSDNSLYTNAKGGTISAFDGGSDSSSESEPEEPQNRKKLRMEAS) form a disordered region. Ser107 bears the Phosphoserine mark. Positions 107–124 (SSAQLQTNYPSSDNSLYT) are enriched in polar residues. 2 positions are modified to N6-acetyllysine: Lys153 and Lys154.

The protein belongs to the MAX family. As to quaternary structure, efficient DNA binding requires dimerization with another bHLH protein. Binds DNA as a heterodimer with MYC or MAD. Part of the E2F6.com-1 complex in G0 phase composed of E2F6, MGA, MAX, TFDP1, CBX3, BAT8, EUHMTASE1, RING1, RNF2, MBLR, L3MBTL2 and YAF2. Component of some MLL1/MLL complex, at least composed of the core components KMT2A/MLL1, ASH2L, HCFC1/HCF1, WDR5 and RBBP5, as well as the facultative components BACC1, CHD8, E2F6, HSP70, INO80C, KANSL1, LAS1L, MAX, MCRS1, MGA, MYST1/MOF, PELP1, PHF20, PRP31, RING2, RUVB1/TIP49A, RUVB2/TIP49B, SENP3, TAF1, TAF4, TAF6, TAF7, TAF9 and TEX10. Interacts with SPAG9. The heterodimer MYC:MAX interacts with ABI1; the interaction may enhance MYC:MAX transcriptional activity. Phosphorylated.

The protein localises to the nucleus. It is found in the cell projection. The protein resides in the dendrite. Its function is as follows. Transcription regulator. Forms a sequence-specific DNA-binding protein complex with MYC or MAD which recognizes the core sequence 5'-CAC[GA]TG-3'. The MYC:MAX complex is a transcriptional activator, whereas the MAD:MAX complex is a repressor. May repress transcription via the recruitment of a chromatin remodeling complex containing H3 'Lys-9' histone methyltransferase activity. Represses MYC transcriptional activity from E-box elements. The protein is Protein max of Rattus norvegicus (Rat).